The chain runs to 61 residues: Insect toxin LqhIT5 (61 aa).

The LCN-type CS-alpha/beta domain maps to 1–61 (DGYIRGGDGC…EWKYETNTCG (61 aa)). 4 disulfides stabilise this stretch: Cys10-Cys60, Cys14-Cys35, Cys21-Cys42, and Cys25-Cys44.

Belongs to the long (4 C-C) scorpion toxin superfamily. Sodium channel inhibitor family. Beta subfamily. Expressed by the venom gland.

Its subcellular location is the secreted. Excitatory insect beta-toxins induce a spastic paralysis. They bind voltage-independently at site-4 of sodium channels (Nav) and shift the voltage of activation toward more negative potentials thereby affecting sodium channel activation and promoting spontaneous and repetitive firing. This toxin is active only on insects. It operates by inducing a fast contraction paralysis without depressant activity. It is more similar to the excitatory toxins in its mode of action and the depressant toxins in its primary structure. The polypeptide is Insect toxin LqhIT5 (Leiurus hebraeus (Hebrew deathstalker scorpion)).